Here is a 138-residue protein sequence, read N- to C-terminus: Basic phospholipase A2 Cvv-N6 (138 aa).

Residues 1–16 (MRTFWIVALLLVGVEG) form the signal peptide. Cystine bridges form between Cys42–Cys131, Cys44–Cys60, Cys59–Cys111, Cys65–Cys138, Cys66–Cys104, Cys73–Cys97, and Cys91–Cys102. Residues Tyr43, Gly45, and Gly47 each contribute to the Ca(2+) site. His63 is a catalytic residue. Asp64 serves as a coordination point for Ca(2+). The active site involves Asp105.

This sequence belongs to the phospholipase A2 family. Group II subfamily. D49 sub-subfamily. Monomer. Binds to calmodulin. Ca(2+) serves as cofactor. In terms of tissue distribution, expressed by the venom gland.

The protein resides in the secreted. The catalysed reaction is a 1,2-diacyl-sn-glycero-3-phosphocholine + H2O = a 1-acyl-sn-glycero-3-phosphocholine + a fatty acid + H(+). With respect to regulation, heparin and wedelolactone inhibit the myotoxic activity. The PLA2 inhibitor, para-bromophenacyl bromide (BPB), inhibits enzymatic and myotoxic activities. Functionally, snake venom phospholipase A2 (PLA2) that is myotoxic and displays moderate edema-inducing activity in rat paws. Does not show neurotoxic activity. PLA2 catalyzes the calcium-dependent hydrolysis of the 2-acyl groups in 3-sn-phosphoglycerides. The protein is Basic phospholipase A2 Cvv-N6 of Crotalus viridis viridis (Prairie rattlesnake).